Here is a 352-residue protein sequence, read N- to C-terminus: tRNA uridine(34) hydroxylase (352 aa).

The 95-residue stretch at 144-238 (SDPDVILIDT…YLEEVPASDS (95 aa)) folds into the Rhodanese domain. Residue cysteine 198 is the Cysteine persulfide intermediate of the active site.

The protein belongs to the TrhO family.

The enzyme catalyses uridine(34) in tRNA + AH2 + O2 = 5-hydroxyuridine(34) in tRNA + A + H2O. Its function is as follows. Catalyzes oxygen-dependent 5-hydroxyuridine (ho5U) modification at position 34 in tRNAs. This is tRNA uridine(34) hydroxylase from Psychrobacter cryohalolentis (strain ATCC BAA-1226 / DSM 17306 / VKM B-2378 / K5).